Consider the following 251-residue polypeptide: Octanoyltransferase (251 aa).

The BPL/LPL catalytic domain maps to 49-230 (DEIPDQLLIL…ALDDALAGRL (182 aa)). Substrate is bound by residues 87–94 (RGGRITWH), 160–162 (AIG), and 173–175 (GVA). Catalysis depends on Cys-191, which acts as the Acyl-thioester intermediate.

The protein belongs to the LipB family.

It is found in the cytoplasm. It carries out the reaction octanoyl-[ACP] + L-lysyl-[protein] = N(6)-octanoyl-L-lysyl-[protein] + holo-[ACP] + H(+). Its pathway is protein modification; protein lipoylation via endogenous pathway; protein N(6)-(lipoyl)lysine from octanoyl-[acyl-carrier-protein]: step 1/2. Catalyzes the transfer of endogenously produced octanoic acid from octanoyl-acyl-carrier-protein onto the lipoyl domains of lipoate-dependent enzymes. Lipoyl-ACP can also act as a substrate although octanoyl-ACP is likely to be the physiological substrate. The polypeptide is Octanoyltransferase (Corynebacterium glutamicum (strain R)).